Here is a 507-residue protein sequence, read N- to C-terminus: Glycerol kinase (507 aa).

Thr-15 contacts ADP. The ATP site is built by Thr-15, Thr-16, and Ser-17. Thr-15 serves as a coordination point for sn-glycerol 3-phosphate. Arg-19 lines the ADP pocket. 4 residues coordinate sn-glycerol 3-phosphate: Arg-85, Glu-86, Tyr-137, and Asp-250. Glycerol is bound by residues Arg-85, Glu-86, Tyr-137, Asp-250, and Gln-251. Positions 272 and 316 each coordinate ADP. The ATP site is built by Thr-272, Gly-316, Gln-320, and Gly-417. An ADP-binding site is contributed by Gly-417.

This sequence belongs to the FGGY kinase family.

It carries out the reaction glycerol + ATP = sn-glycerol 3-phosphate + ADP + H(+). It functions in the pathway polyol metabolism; glycerol degradation via glycerol kinase pathway; sn-glycerol 3-phosphate from glycerol: step 1/1. Inhibited by fructose 1,6-bisphosphate (FBP). Its function is as follows. Key enzyme in the regulation of glycerol uptake and metabolism. Catalyzes the phosphorylation of glycerol to yield sn-glycerol 3-phosphate. The polypeptide is Glycerol kinase (Mycoplasmopsis pulmonis (strain UAB CTIP) (Mycoplasma pulmonis)).